Reading from the N-terminus, the 383-residue chain is ATP phosphoribosyltransferase regulatory subunit (383 aa).

It belongs to the class-II aminoacyl-tRNA synthetase family. HisZ subfamily. As to quaternary structure, heteromultimer composed of HisG and HisZ subunits.

Its subcellular location is the cytoplasm. It participates in amino-acid biosynthesis; L-histidine biosynthesis; L-histidine from 5-phospho-alpha-D-ribose 1-diphosphate: step 1/9. Required for the first step of histidine biosynthesis. May allow the feedback regulation of ATP phosphoribosyltransferase activity by histidine. The sequence is that of ATP phosphoribosyltransferase regulatory subunit from Janthinobacterium sp. (strain Marseille) (Minibacterium massiliensis).